Here is a 133-residue protein sequence, read N- to C-terminus: Large ribosomal subunit protein bL20 (133 aa).

This sequence belongs to the bacterial ribosomal protein bL20 family.

Functionally, binds directly to 23S ribosomal RNA and is necessary for the in vitro assembly process of the 50S ribosomal subunit. It is not involved in the protein synthesizing functions of that subunit. The polypeptide is Large ribosomal subunit protein bL20 (Chelativorans sp. (strain BNC1)).